A 102-amino-acid chain; its full sequence is Large ribosomal subunit protein uL23c (102 aa).

Belongs to the universal ribosomal protein uL23 family. Part of the 50S ribosomal subunit.

Its subcellular location is the plastid. The protein localises to the chloroplast. In terms of biological role, binds to 23S rRNA. The sequence is that of Large ribosomal subunit protein uL23c (rpl23) from Phaeodactylum tricornutum (strain CCAP 1055/1).